The following is a 644-amino-acid chain: Exoribonuclease 2 (644 aa).

An RNB domain is found at 189 to 516 (RQDLTALNFV…NHRLLKAVIK (328 aa)). One can recognise an S1 motif domain in the interval 561-643 (DTRFAAEIID…DTRSIIARPA (83 aa)).

It belongs to the RNR ribonuclease family. RNase II subfamily.

It is found in the cytoplasm. It catalyses the reaction Exonucleolytic cleavage in the 3'- to 5'-direction to yield nucleoside 5'-phosphates.. Its function is as follows. Involved in mRNA degradation. Hydrolyzes single-stranded polyribonucleotides processively in the 3' to 5' direction. The protein is Exoribonuclease 2 of Salmonella arizonae (strain ATCC BAA-731 / CDC346-86 / RSK2980).